The sequence spans 343 residues: Calcium/calmodulin-dependent protein kinase type 1B (343 aa).

In terms of domain architecture, Protein kinase spans 15–270; that stretch reads YEIREKLGSG…CQQALQHLWI (256 aa). Residues 21–29 and Lys44 contribute to the ATP site; that span reads LGSGAFSEV. The active-site Proton acceptor is Asp136. The interval 290–311 is calmodulin-binding; that stretch reads KNFARTHWKRAFNATSFLRHIR. The interval 314–343 is disordered; the sequence is GQSPEGEEASRQCMTRHSHPGLGTSQSPKW. At Ser338 the chain carries Phosphoserine.

Belongs to the protein kinase superfamily. CAMK Ser/Thr protein kinase family. CaMK subfamily. Expressed at highest levels in adult brain, and expressed in embryo. In the adult brain detected at high levels in the anterior olfactory nuclei, piriform cortex, septal nuclei, bed nuclei of the stria terminalis, hippocampal pyramidal cells, dentate granule cells, amygdala, hypothalamic nuclei, parabrachial nucleus, and nucleus of the solitary tract. Expressed at lower levels in adult ovary and heart and at very low levels in testis, lung and muscle.

It is found in the cytoplasm. Its subcellular location is the nucleus. The enzyme catalyses L-seryl-[protein] + ATP = O-phospho-L-seryl-[protein] + ADP + H(+). The catalysed reaction is L-threonyl-[protein] + ATP = O-phospho-L-threonyl-[protein] + ADP + H(+). Activated by Ca(2+)/calmodulin. Functionally, calcium/calmodulin-dependent protein kinase belonging to a proposed calcium-triggered signaling cascade. In vitro phosphorylates CREB1 and SYN1/synapsin I. Phosphorylates and activates CAMK1. This is Calcium/calmodulin-dependent protein kinase type 1B (Pnck) from Mus musculus (Mouse).